The chain runs to 464 residues: E3 ubiquitin-protein ligase ITT1 (464 aa).

The segment at 176–455 is TRIAD supradomain; sequence SNYHCCICME…EAYSGCYGRL (280 aa). C180, C183, C207, C210, C290, C300, C316, C319, C402, and C405 together coordinate Zn(2+). The segment at 180–236 adopts an RING-type 1 zinc-finger fold; sequence CCICMEMEKGVRMIKLPCENANVEHYLCRGCAKSYFTAMIQENRISSVRCPQCEYKE. The segment at 267–338 adopts an IBR-type zinc-finger fold; that stretch reads DTELCERYEK…HAWHGYNNKC (72 aa). An RING-type 2; atypical zinc finger spans residues 402–431; sequence CPKCKVVVERSEGCNKMKCEVCGTLFCFIC. C415 is an active-site residue. C420, C423, C428, C431, H443, and C451 together coordinate Zn(2+).

Belongs to the RBR family. RNF14 subfamily. Interacts with translation release factors eRF1 (SUP45) and eRF3 (SUP35) in vitro.

It carries out the reaction [E2 ubiquitin-conjugating enzyme]-S-ubiquitinyl-L-cysteine + [acceptor protein]-L-lysine = [E2 ubiquitin-conjugating enzyme]-L-cysteine + [acceptor protein]-N(6)-ubiquitinyl-L-lysine.. It participates in protein modification; protein ubiquitination. Its function is as follows. E3 ubiquitin-protein ligase involved in translation quality control. Involved in the rescue of stalled ribosomes by promoting ubiquitination and degradation of proteins on stalled ribosomes. Specifically required to resolve RNA-protein cross-links caused by reactive aldehydes, which trigger translation stress by stalling ribosomes: acts by catalying 'Lys-6'-linked ubiquitination of RNA-protein cross-links, leading to their degradation. Interacts with the translation termination factors eRF1 (SUP45) and eRF3 (SUP35); overexpression decreases the efficiency of translation termination. The chain is E3 ubiquitin-protein ligase ITT1 from Saccharomyces cerevisiae (strain ATCC 204508 / S288c) (Baker's yeast).